Here is a 430-residue protein sequence, read N- to C-terminus: GTPase Obg (430 aa).

In terms of domain architecture, Obg spans 1-158 (MFVDQVKISL…LDVSLELKLL (158 aa)). The disordered stretch occupies residues 118–145 (KGGRGGRGNSRFATPRNPAPDFSEKGEP). Residues 159–329 (ADVGLVGFPS…LLYAIADKLE (171 aa)) form the OBG-type G domain. GTP contacts are provided by residues 165-172 (GFPSVGKS), 190-194 (FTTIK), 212-215 (DLPG), 282-285 (NKMD), and 310-312 (STI). The Mg(2+) site is built by S172 and T192. Positions 352–430 (KHTPSQDKFT…ILGGEFEFVE (79 aa)) constitute an OCT domain.

Belongs to the TRAFAC class OBG-HflX-like GTPase superfamily. OBG GTPase family. Monomer. The cofactor is Mg(2+).

Its subcellular location is the cytoplasm. In terms of biological role, an essential GTPase which binds GTP, GDP and possibly (p)ppGpp with moderate affinity, with high nucleotide exchange rates and a fairly low GTP hydrolysis rate. Plays a role in control of the cell cycle, stress response, ribosome biogenesis and in those bacteria that undergo differentiation, in morphogenesis control. In Staphylococcus aureus (strain Mu3 / ATCC 700698), this protein is GTPase Obg.